The sequence spans 282 residues: Nucleotide-binding protein Ping_2894 (282 aa).

An ATP-binding site is contributed by 8–15 (GRSGSGKT). 56–59 (DIRN) is a binding site for GTP.

It belongs to the RapZ-like family.

In terms of biological role, displays ATPase and GTPase activities. This is Nucleotide-binding protein Ping_2894 from Psychromonas ingrahamii (strain DSM 17664 / CCUG 51855 / 37).